We begin with the raw amino-acid sequence, 73 residues long: Venom peptide La1 (73 aa).

Lysine amide is present on lysine 73.

It belongs to the scorpion La1-like peptide family. In terms of processing, contains 4 disulfide bonds. As to expression, expressed by the venom gland.

It localises to the secreted. Its function is as follows. Not toxic to insect. The protein is Venom peptide La1 of Liocheles australasiae (Dwarf wood scorpion).